Consider the following 167-residue polypeptide: MERFIERLMYSARWIMAPIYLGLSLALLALGIKFFQEVFHIFTVIISMKEVELILIILSLIDISLVGGLIVMVMYSGYENFVSRLDLDDHDDKLSWLGKLDAGSLKNKVAASIVAISSIHLLKVFMNTENIADDKIKWYLLIHITFVMSAFAMGYLDKLLRDKDSPH.

4 helical membrane-spanning segments follow: residues 15–35, 53–73, 109–129, and 136–156; these read IMAP…IKFF, LILI…IVMV, VAAS…MNTE, and IKWY…MGYL.

The protein belongs to the UPF0114 family.

The protein resides in the cell membrane. This chain is UPF0114 protein Tola_1474, found in Tolumonas auensis (strain DSM 9187 / NBRC 110442 / TA 4).